A 129-amino-acid chain; its full sequence is MGKAKAPRQLKDNEAKAVARTLRVSPQKLNLVASMIRGKKVNAALADLTFSRKRIAGTVKKTLESAIANAENNHDLDVDALIVAEAYVGKSIVMKRFHVRGRGRASRIEKPFSHLTIVVREVAEKGEAA.

It belongs to the universal ribosomal protein uL22 family. Part of the 50S ribosomal subunit.

Functionally, this protein binds specifically to 23S rRNA; its binding is stimulated by other ribosomal proteins, e.g. L4, L17, and L20. It is important during the early stages of 50S assembly. It makes multiple contacts with different domains of the 23S rRNA in the assembled 50S subunit and ribosome. The globular domain of the protein is located near the polypeptide exit tunnel on the outside of the subunit, while an extended beta-hairpin is found that lines the wall of the exit tunnel in the center of the 70S ribosome. The chain is Large ribosomal subunit protein uL22 from Brucella suis biovar 1 (strain 1330).